A 141-amino-acid polypeptide reads, in one-letter code: Alpha-lactalbumin (141 aa).

Positions Met-1 to Ala-19 are cleaved as a signal peptide. A C-type lysozyme domain is found at Lys-20 to Met-141. 4 cysteine pairs are disulfide-bonded: Cys-25–Cys-138, Cys-47–Cys-129, Cys-80–Cys-95, and Cys-91–Cys-109. Residues Lys-97, Asp-100, Asp-102, Asp-105, and Asp-106 each contribute to the Ca(2+) site.

It belongs to the glycosyl hydrolase 22 family. As to quaternary structure, lactose synthase (LS) is a heterodimer of a catalytic component, beta1,4-galactosyltransferase (beta4Gal-T1) and a regulatory component, alpha-lactalbumin (LA). In terms of tissue distribution, mammary gland specific. Secreted in milk.

Its subcellular location is the secreted. In terms of biological role, regulatory subunit of lactose synthase, changes the substrate specificity of galactosyltransferase in the mammary gland making glucose a good acceptor substrate for this enzyme. This enables LS to synthesize lactose, the major carbohydrate component of milk. In other tissues, galactosyltransferase transfers galactose onto the N-acetylglucosamine of the oligosaccharide chains in glycoproteins. This is Alpha-lactalbumin (LALBA) from Sus scrofa (Pig).